The following is a 152-amino-acid chain: Phospholipase A2 (152 aa).

Residues 1–20 form the signal peptide; the sequence is MAACHRILLLLSVAVASGAA. Cystine bridges form between cysteine 39-cysteine 96, cysteine 53-cysteine 142, cysteine 55-cysteine 70, cysteine 69-cysteine 124, cysteine 75-cysteine 149, cysteine 76-cysteine 117, cysteine 85-cysteine 110, and cysteine 103-cysteine 115. Residues glycine 56 and glycine 58 each contribute to the Ca(2+) site. Histidine 73 is a catalytic residue. Residue aspartate 74 coordinates Ca(2+). Aspartate 118 is a catalytic residue.

It belongs to the phospholipase A2 family. Expressed by the venom gland. Heavily expressed in the venom gland transcriptome.

It is found in the secreted. It carries out the reaction a 1,2-diacyl-sn-glycero-3-phosphocholine + H2O = a 1-acyl-sn-glycero-3-phosphocholine + a fatty acid + H(+). Its function is as follows. PA2 catalyzes the calcium-dependent hydrolysis of the 2-acyl groups in 3-sn-phosphoglycerides. The polypeptide is Phospholipase A2 (Meiacanthus atrodorsalis (Forktail blenny)).